The following is a 338-amino-acid chain: 1-aminocyclopropane-1-carboxylate deaminase (338 aa).

Residue lysine 51 is modified to N6-(pyridoxal phosphate)lysine. Serine 78 serves as the catalytic Nucleophile.

Belongs to the ACC deaminase/D-cysteine desulfhydrase family. As to quaternary structure, homotrimer. Pyridoxal 5'-phosphate serves as cofactor.

The catalysed reaction is 1-aminocyclopropane-1-carboxylate + H2O = 2-oxobutanoate + NH4(+). In terms of biological role, catalyzes a cyclopropane ring-opening reaction, the irreversible conversion of 1-aminocyclopropane-1-carboxylate (ACC) to ammonia and alpha-ketobutyrate. Allows growth on ACC as a nitrogen source. This is 1-aminocyclopropane-1-carboxylate deaminase from Paraburkholderia xenovorans (strain LB400).